Reading from the N-terminus, the 597-residue chain is Lipoprotein LpqB (597 aa).

The signal sequence occupies residues 1–28; that stretch reads MTPGSRSAMRSRSVCGAIALAVLVTVSG. A lipid anchor (N-palmitoyl cysteine) is attached at C29. Residue C29 is the site of S-diacylglycerol cysteine attachment. Residues 39–51 show a composition bias toward polar residues; it reads QAIGTINRDSPGS. Residues 39-59 are disordered; the sequence is QAIGTINRDSPGSSVAAPAPG.

The protein belongs to the LpqB lipoprotein family.

The protein localises to the cell membrane. The polypeptide is Lipoprotein LpqB (Rhodococcus opacus (strain B4)).